The chain runs to 87 residues: Small polypeptide ROTUNDIFOLIA LIKE 2 (87 aa).

A helical transmembrane segment spans residues 19 to 35; sequence LIPHTSHYILQLVYLHL. The required for DVL/RTFL small polypeptide activity stretch occupies residues 56–87; that stretch reads GQMGRLNRAFREKRARFYIFRRCVIMLLRWSD.

This sequence belongs to the DVL/RTFL small polypeptides family.

The protein localises to the cell membrane. In terms of biological role, small polypeptide acting as a regulatory molecule which coordinates cellular responses required for differentiation, growth and development, probably by restricting polar cell proliferation in lateral organs. The sequence is that of Small polypeptide ROTUNDIFOLIA LIKE 2 from Oryza sativa subsp. japonica (Rice).